Here is a 150-residue protein sequence, read N- to C-terminus: CCAAT/enhancer-binding protein gamma (150 aa).

A Glycyl lysine isopeptide (Lys-Gly) (interchain with G-Cter in SUMO2) cross-link involves residue Lys-3. Residues 27 to 94 (GLQQVPQLVP…QKAQDTLQRV (68 aa)) are disordered. The segment covering 28–37 (LQQVPQLVPA) has biased composition (low complexity). The segment covering 56–72 (SPMDRNSDEYRQRRERN) has biased composition (basic and acidic residues). One can recognise a bZIP domain in the interval 62–125 (SDEYRQRRER…SVLKDLFLEH (64 aa)). The tract at residues 66 to 93 (RQRRERNNMAVKKSRLKSKQKAQDTLQR) is basic motif. A leucine-zipper region spans residues 97-118 (LKEENERLEAKIKLLTKELSVL).

Belongs to the bZIP family. C/EBP subfamily. As to quaternary structure, binds DNA as a dimer and can form stable heterodimers with CEBPA and CEBPB. Interacts with ZNF638; this interaction increases transcriptional activation.

The protein resides in the nucleus. In terms of biological role, transcription factor that binds to the promoter and the enhancer regions of target genes. Binds to the promoter and the enhancer of the alpha-1-fetoprotein gene. Binds to the enhancer element PRE-I (positive regulatory element-I) of the IL-4 gene. Binds to the promoter and the enhancer of the immunoglobulin heavy chain. Binds to GPE1, a cis-acting element in the G-CSF gene promoter. This Rattus norvegicus (Rat) protein is CCAAT/enhancer-binding protein gamma (Cebpg).